An 80-amino-acid chain; its full sequence is Conotoxin PnMKLT1-0121 (80 aa).

The first 22 residues, 1–22 (MKLTCMMIVAVLFLTAWTFATA), serve as a signal peptide directing secretion. Residues 23–49 (DDPRNRLENFFSKTQHEMKNPEASKLN) constitute a propeptide that is removed on maturation. 3 disulfide bridges follow: cysteine 52–cysteine 67, cysteine 59–cysteine 71, and cysteine 66–cysteine 75.

Belongs to the conotoxin O1 superfamily. Expressed by the venom duct.

The protein localises to the secreted. The protein is Conotoxin PnMKLT1-0121 of Conus pennaceus (Feathered cone).